The following is a 437-amino-acid chain: Phosphomethylpyrimidine synthase (437 aa).

Residues N69, M98, Y127, H163, 185 to 187 (SRG), 226 to 229 (DACR), and E265 contribute to the substrate site. H269 is a binding site for Zn(2+). Y292 serves as a coordination point for substrate. H333 contacts Zn(2+). [4Fe-4S] cluster is bound by residues C409, C412, and C416.

The protein belongs to the ThiC family. The cofactor is [4Fe-4S] cluster.

The enzyme catalyses 5-amino-1-(5-phospho-beta-D-ribosyl)imidazole + S-adenosyl-L-methionine = 4-amino-2-methyl-5-(phosphooxymethyl)pyrimidine + CO + 5'-deoxyadenosine + formate + L-methionine + 3 H(+). Its pathway is cofactor biosynthesis; thiamine diphosphate biosynthesis. Its function is as follows. Catalyzes the synthesis of the hydroxymethylpyrimidine phosphate (HMP-P) moiety of thiamine from aminoimidazole ribotide (AIR) in a radical S-adenosyl-L-methionine (SAM)-dependent reaction. This is Phosphomethylpyrimidine synthase from Clostridium kluyveri (strain NBRC 12016).